The following is a 190-amino-acid chain: dTTP/UTP pyrophosphatase (190 aa).

Asp-67 acts as the Proton acceptor in catalysis.

Belongs to the Maf family. YhdE subfamily. It depends on a divalent metal cation as a cofactor.

The protein resides in the cytoplasm. The enzyme catalyses dTTP + H2O = dTMP + diphosphate + H(+). The catalysed reaction is UTP + H2O = UMP + diphosphate + H(+). Its function is as follows. Nucleoside triphosphate pyrophosphatase that hydrolyzes dTTP and UTP. May have a dual role in cell division arrest and in preventing the incorporation of modified nucleotides into cellular nucleic acids. The chain is dTTP/UTP pyrophosphatase from Aquifex aeolicus (strain VF5).